A 335-amino-acid chain; its full sequence is uncharacterized protein (335 aa).

Residue 28–35 participates in ATP binding; sequence GPINSGKT.

The protein belongs to the archaeal ATPase family.

This is an uncharacterized protein from Pyrococcus abyssi (strain GE5 / Orsay).